Here is a 258-residue protein sequence, read N- to C-terminus: Snake venom serine protease KN12 (258 aa).

The N-terminal stretch at 1–18 is a signal peptide; it reads MVLIRVLANLLILQLSYA. Residues 19 to 24 constitute a propeptide that is removed on maturation; it reads QRSSEL. A Peptidase S1 domain is found at 25–249; it reads VIGGDECNIN…HLDWIQNIIA (225 aa). 6 disulfides stabilise this stretch: C31/C163, C50/C66, C98/C256, C142/C210, C174/C189, and C200/C225. Catalysis depends on H65, which acts as the Charge relay system. An N-linked (GlcNAc...) asparagine glycan is attached at N103. The active-site Charge relay system is D110. N121, N122, N154, and N170 each carry an N-linked (GlcNAc...) asparagine glycan. The Charge relay system role is filled by S204. A glycan (N-linked (GlcNAc...) asparagine) is linked at N251.

This sequence belongs to the peptidase S1 family. Snake venom subfamily. In terms of assembly, monomer. In terms of tissue distribution, expressed by the venom gland.

Its subcellular location is the secreted. Functionally, snake venom serine protease that may act in the hemostasis system of the prey. The protein is Snake venom serine protease KN12 of Trimeresurus stejnegeri (Chinese green tree viper).